We begin with the raw amino-acid sequence, 332 residues long: tRNA-dihydrouridine(20/20a) synthase (332 aa).

FMN-binding positions include 20-22 and glutamine 73; that span reads PMM. Residue cysteine 103 is the Proton donor of the active site. FMN-binding positions include lysine 142, histidine 174, 214–216, and 236–237; these read NGG and GR.

It belongs to the Dus family. DusA subfamily. FMN serves as cofactor.

The catalysed reaction is 5,6-dihydrouridine(20) in tRNA + NADP(+) = uridine(20) in tRNA + NADPH + H(+). It carries out the reaction 5,6-dihydrouridine(20) in tRNA + NAD(+) = uridine(20) in tRNA + NADH + H(+). It catalyses the reaction 5,6-dihydrouridine(20a) in tRNA + NADP(+) = uridine(20a) in tRNA + NADPH + H(+). The enzyme catalyses 5,6-dihydrouridine(20a) in tRNA + NAD(+) = uridine(20a) in tRNA + NADH + H(+). Functionally, catalyzes the synthesis of 5,6-dihydrouridine (D), a modified base found in the D-loop of most tRNAs, via the reduction of the C5-C6 double bond in target uridines. Specifically modifies U20 and U20a in tRNAs. The chain is tRNA-dihydrouridine(20/20a) synthase from Pseudomonas aeruginosa (strain ATCC 15692 / DSM 22644 / CIP 104116 / JCM 14847 / LMG 12228 / 1C / PRS 101 / PAO1).